A 459-amino-acid polypeptide reads, in one-letter code: Sorting nexin-8 (459 aa).

A disordered region spans residues 1–53 (MTGGAMDPLPTAPGAAAAEAEVDEEADPPAADSPVPPVSEPRAPDAGQMQVPP). The region spanning 68–176 (ARDAVQVELV…KLFLSFSGPD (109 aa)) is the PX domain. The a 1,2-diacyl-sn-glycero-3-phospho-(1D-myo-inositol-3-phosphate) site is built by Arg104, Lys130, and Arg143.

Belongs to the sorting nexin family.

It localises to the early endosome membrane. May be involved in several stages of intracellular trafficking. May play a role in intracellular protein transport from early endosomes to the trans-Golgi network. The sequence is that of Sorting nexin-8 (SNX8) from Bos taurus (Bovine).